The primary structure comprises 214 residues: Pyridoxine/pyridoxamine 5'-phosphate oxidase (214 aa).

Residues 8–11 and Lys66 contribute to the substrate site; that span reads RINY. Residues 61 to 66, 76 to 77, Arg82, Lys83, and Gln105 contribute to the FMN site; these read RIVLIK and FT. Residues Tyr123, Arg127, and Ser131 each contribute to the substrate site. Residues 140 to 141 and Trp184 contribute to the FMN site; that span reads QS. Substrate is bound at residue 190–192; the sequence is RLH. Arg194 serves as a coordination point for FMN.

This sequence belongs to the pyridoxamine 5'-phosphate oxidase family. In terms of assembly, homodimer. FMN serves as cofactor.

It catalyses the reaction pyridoxamine 5'-phosphate + O2 + H2O = pyridoxal 5'-phosphate + H2O2 + NH4(+). The catalysed reaction is pyridoxine 5'-phosphate + O2 = pyridoxal 5'-phosphate + H2O2. The protein operates within cofactor metabolism; pyridoxal 5'-phosphate salvage; pyridoxal 5'-phosphate from pyridoxamine 5'-phosphate: step 1/1. Its pathway is cofactor metabolism; pyridoxal 5'-phosphate salvage; pyridoxal 5'-phosphate from pyridoxine 5'-phosphate: step 1/1. Catalyzes the oxidation of either pyridoxine 5'-phosphate (PNP) or pyridoxamine 5'-phosphate (PMP) into pyridoxal 5'-phosphate (PLP). This is Pyridoxine/pyridoxamine 5'-phosphate oxidase from Burkholderia cenocepacia (strain HI2424).